A 646-amino-acid polypeptide reads, in one-letter code: MIQGKLKRLKRYFTRALHRIQKGPGYTYKELLVWFCDNTNTHGPKRIIKEGPKKRVMWFILTLVFAGLVFWQWGLLILTYLSYGVSVSLSIGFKTMEFPAVTVCNTNPYKYSRVKPLLKDLDELVATALDRIQYSSQTQANTFTYNNTRQNVTLDPALWNHIPLVVIDENDPSNPVIHNIFDNSVFYSKNNLLRNSSEDQTSYAQRYKVAMKLCTNNNTQCVYRNFTSGVQALREWYLLQLSIIFSNVPLSDRVDMGFKAEDLILTCLFGGQPCSYRNFTHIYDADYGNCYIFNWGQEGDDTMSSANPGADFGLKLVLDIEQDEYLPFLQTTAAARLILHQQRSFPFVKDLGIYAKPGTETSIAVLVDQLQQMEAPYSSCTVNGSDIPVQNLYEEFNSSYSIQSCLRSCYQEEMVKTCKCAHYQYPLPNGSEYCTNNKHPDWVPCYYGLRDSVAIRENCISLCQQPCNDTHYKMVISMADWPSAGAEDWIFHVLSYEKDSSYDITVNRNGIIRLNIYFQEFNYRSISESEATNVVWLLSNLGGQFGFWMGGSVLCIIEFGEIIIDCMWITILKLLAWIRNRRQRRQRPQYADPPPTVSELVEAHTNPGFQHDDGNHVTEDIPGTPPPNYDSLRVNTIEPVSSDEEN.

At 1–57 (MIQGKLKRLKRYFTRALHRIQKGPGYTYKELLVWFCDNTNTHGPKRIIKEGPKKRVM) the chain is on the cytoplasmic side. The chain crosses the membrane as a helical span at residues 58–78 (WFILTLVFAGLVFWQWGLLIL). Topologically, residues 79–551 (TYLSYGVSVS…GGQFGFWMGG (473 aa)) are extracellular. Cystine bridges form between C104–C290, C214–C221, C267–C274, C380–C467, C405–C463, C409–C459, C418–C445, and C420–C434. The helical transmembrane segment at 552–572 (SVLCIIEFGEIIIDCMWITIL) threads the bilayer. Residues 573–646 (KLLAWIRNRR…IEPVSSDEEN (74 aa)) are Cytoplasmic-facing. The segment at 586 to 646 (QRPQYADPPP…IEPVSSDEEN (61 aa)) is disordered. A compositionally biased stretch (basic and acidic residues) spans 610–619 (QHDDGNHVTE).

Belongs to the amiloride-sensitive sodium channel (TC 1.A.6) family. SCNN1B subfamily. In terms of assembly, component of the heterotrimeric epithelial sodium channel (ENaC) composed of an alpha/SCNN1A, a beta/SCNN1B and a gamma/SCNN1G subunit.

It localises to the apical cell membrane. The protein localises to the cytoplasmic vesicle membrane. The enzyme catalyses Na(+)(in) = Na(+)(out). With respect to regulation, originally identified and characterized by its inhibition by the diuretic drug amiloride. This is one of the three pore-forming subunits of the heterotrimeric epithelial sodium channel (ENaC), a critical regulator of sodium balance and fluid homeostasis. ENaC operates in epithelial tissues, where it mediates the electrodiffusion of sodium ions from extracellular fluid through the apical membrane of cells, with water following osmotically. The sequence is that of Epithelial sodium channel subunit beta-2 (scnn1b-b) from Xenopus laevis (African clawed frog).